Consider the following 129-residue polypeptide: M-zodatoxin-Lt8h (129 aa).

The signal sequence occupies residues 1–20; it reads MKYFVVALALVAAFACIAES. A propeptide spanning residues 21 to 60 is cleaved from the precursor; that stretch reads KPAESEHELAEVEEENELADLEDAVWLEDLADLSDLEETR.

This sequence belongs to the cationic peptide 06 (cytoinsectotoxin) family. As to expression, expressed by the venom gland.

Its subcellular location is the secreted. In terms of biological role, insecticidal, cytolytic and antimicrobial peptide. Has insecticidal activity against the flesh fly S.carnaria. Has antibacterial activity against the Gram-negative bacteria E.coli. Forms voltage-dependent, ion-permeable channels in membranes. At high concentration causes cell membrane lysis. This is M-zodatoxin-Lt8h (cit 1-11) from Lachesana tarabaevi (Spider).